Consider the following 76-residue polypeptide: MSNIEERVIKVIAEQLNVDEGQVKADAHFIDDLGADSLDLVELVMTLEKEFDCEIPDEEAEKITTVQSAIDFVKSR.

Residues 2–76 enclose the Carrier domain; the sequence is SNIEERVIKV…QSAIDFVKSR (75 aa). Serine 37 carries the post-translational modification O-(pantetheine 4'-phosphoryl)serine.

The protein belongs to the acyl carrier protein (ACP) family. Post-translationally, 4'-phosphopantetheine is transferred from CoA to a specific serine of apo-ACP by AcpS. This modification is essential for activity because fatty acids are bound in thioester linkage to the sulfhydryl of the prosthetic group.

It localises to the cytoplasm. The protein operates within lipid metabolism; fatty acid biosynthesis. Its function is as follows. Carrier of the growing fatty acid chain in fatty acid biosynthesis. This is Acyl carrier protein from Dichelobacter nodosus (strain VCS1703A).